Reading from the N-terminus, the 216-residue chain is Gas vesicle protein H (216 aa).

The disordered stretch occupies residues 1-141 (MSPNLNGPGG…IHIETRETDD (141 aa)). Residues 15 to 25 (DRPDEPDDSDR) show a composition bias toward acidic residues. 3 stretches are compositionally biased toward basic and acidic residues: residues 38 to 51 (PDDR…RPSD), 73 to 84 (DGHRQGHGRIDR), and 107 to 141 (KPSD…ETDD).

Belongs to the gas vesicle GvpH family. As to quaternary structure, gvpF to GvpM interact with each other in vitro, and may form multi-subunit complex(es). Interacts with GvpC. Might interact with GvpA.

It localises to the gas vesicle. Functionally, proteins GvpF to GvpM might be involved in nucleating gas vesicle formation. A minor component of the gas vesicle. Gas vesicles are hollow, gas filled proteinaceous nanostructures found in some microorganisms. They allow positioning of halobacteria at the optimal depth for growth in the poorly aerated, shallow brine pools of their habitat. Its function is as follows. Expression of a 9.5 kb mc-vac DNA fragment containing 2 divergently transcribed regions (gvpD-gvpE-gvpF-gvpG-gvpH-gvpI-gvpJ-gvpK-gvpL-gvpM and gvpA-gvpC-gvpN-gvpO) allows H.volcanii to produce gas vesicles. The chain is Gas vesicle protein H from Haloferax mediterranei (strain ATCC 33500 / DSM 1411 / JCM 8866 / NBRC 14739 / NCIMB 2177 / R-4) (Halobacterium mediterranei).